Consider the following 156-residue polypeptide: Small ribosomal subunit protein uS7 (156 aa).

It belongs to the universal ribosomal protein uS7 family. Part of the 30S ribosomal subunit. Contacts proteins S9 and S11.

Functionally, one of the primary rRNA binding proteins, it binds directly to 16S rRNA where it nucleates assembly of the head domain of the 30S subunit. Is located at the subunit interface close to the decoding center, probably blocks exit of the E-site tRNA. The protein is Small ribosomal subunit protein uS7 of Syntrophomonas wolfei subsp. wolfei (strain DSM 2245B / Goettingen).